The sequence spans 111 residues: Iron-sulfur cluster assembly protein CyaY (111 aa).

It belongs to the frataxin family.

In terms of biological role, involved in iron-sulfur (Fe-S) cluster assembly. May act as a regulator of Fe-S biogenesis. The protein is Iron-sulfur cluster assembly protein CyaY of Cupriavidus taiwanensis (strain DSM 17343 / BCRC 17206 / CCUG 44338 / CIP 107171 / LMG 19424 / R1) (Ralstonia taiwanensis (strain LMG 19424)).